Here is a 198-residue protein sequence, read N- to C-terminus: MQLQINVASHPLIQHWSGILENNNNPGTILRTACSELGKWITYEIMREWLVTETVSIKDNTTISLISNHYKYIIVIIMPYGFILAEGARALLPTANIALVSYNNSIDNISDKLDSFTKILVLDLFLDEIIMTSVLEELIKKGAILNNIKIACLECGSSQLNKLGQKWSTLEIYTTKVNSITDNSEATKEQVLKDKFFA.

It belongs to the UPRTase family.

It is found in the plastid. The protein resides in the chloroplast. This chain is Uracil phosphoribosyltransferase homolog, found in Porphyra purpurea (Red seaweed).